The chain runs to 410 residues: Peptidase T (410 aa).

Residue His-78 coordinates Zn(2+). Residue Asp-80 is part of the active site. Asp-140 lines the Zn(2+) pocket. Catalysis depends on Glu-173, which acts as the Proton acceptor. The Zn(2+) site is built by Glu-174, Asp-196, and His-379.

This sequence belongs to the peptidase M20B family. It depends on Zn(2+) as a cofactor.

The protein localises to the cytoplasm. The enzyme catalyses Release of the N-terminal residue from a tripeptide.. Its function is as follows. Cleaves the N-terminal amino acid of tripeptides. This Pectobacterium carotovorum subsp. carotovorum (strain PC1) protein is Peptidase T.